The following is a 418-amino-acid chain: Protein YdhQ (418 aa).

This chain is Protein YdhQ (ydhQ), found in Escherichia coli (strain K12).